Here is a 283-residue protein sequence, read N- to C-terminus: MIIDKLYENVEKKGCVCVGLDTDISYLPKGFLNKFTNIEDAIFAFNQRIVDSTFDVSACYKVQIAYYEAMGIKGMILYKKTLEYIRKKGGIVIADIKRGDISATAKMYAKAHFEGDFESDFITLNPYMGMDTLEPYKDYFKNKEKGVFLLLRTSNEGSKDIQYLDLKDNKKVYNKVGEKIENIGKEFLGNCRYSSIGAVVGCTAEENNIRKELKHTFFLIPGYGAQGGKAEVAKYYLSGGNGGIVNSSRGILLAYKKYDEEGKNFEECARNEVINMKKTLQII.

Residue Lys-97 is the Proton donor of the active site.

It belongs to the OMP decarboxylase family. Type 2 subfamily.

It catalyses the reaction orotidine 5'-phosphate + H(+) = UMP + CO2. It participates in pyrimidine metabolism; UMP biosynthesis via de novo pathway; UMP from orotate: step 2/2. This Clostridium botulinum (strain Kyoto / Type A2) protein is Orotidine 5'-phosphate decarboxylase.